A 154-amino-acid chain; its full sequence is Deoxyuridine 5'-triphosphate nucleotidohydrolase (154 aa).

Residues 68 to 70 (RSG), asparagine 81, and 85 to 87 (TID) each bind substrate.

The protein belongs to the dUTPase family. It depends on Mg(2+) as a cofactor.

The enzyme catalyses dUTP + H2O = dUMP + diphosphate + H(+). It functions in the pathway pyrimidine metabolism; dUMP biosynthesis; dUMP from dCTP (dUTP route): step 2/2. Functionally, this enzyme is involved in nucleotide metabolism: it produces dUMP, the immediate precursor of thymidine nucleotides and it decreases the intracellular concentration of dUTP so that uracil cannot be incorporated into DNA. The sequence is that of Deoxyuridine 5'-triphosphate nucleotidohydrolase from Acidiphilium cryptum (strain JF-5).